We begin with the raw amino-acid sequence, 278 residues long: Undecaprenyl-diphosphatase (278 aa).

8 consecutive transmembrane segments (helical) span residues 3–23 (YILIGVILGIVQGISEWIPIS), 42–62 (VAYSFGLFMEIGTIAAAIFYF), 88–108 (FLVIVTIITGLVGVPLYLFVI), 112–132 (ILGLPMTVLGVVLLIDGIVIY), 152–172 (IIIVGIAQGLAALPGVSRSGM), 190–210 (LSFISLIPAALGAISVTVLFS), 225–245 (GLLISIVVATFVSIFFINALL), and 253–273 (VVLLVIILGIMAIISGILSDI).

The protein belongs to the UppP family.

The protein resides in the cell membrane. It catalyses the reaction di-trans,octa-cis-undecaprenyl diphosphate + H2O = di-trans,octa-cis-undecaprenyl phosphate + phosphate + H(+). Its function is as follows. Catalyzes the dephosphorylation of undecaprenyl diphosphate (UPP). The chain is Undecaprenyl-diphosphatase from Saccharolobus solfataricus (strain ATCC 35092 / DSM 1617 / JCM 11322 / P2) (Sulfolobus solfataricus).